Reading from the N-terminus, the 154-residue chain is Large ribosomal subunit protein uL13 (154 aa).

This sequence belongs to the universal ribosomal protein uL13 family. In terms of assembly, part of the 50S ribosomal subunit.

This protein is one of the early assembly proteins of the 50S ribosomal subunit, although it is not seen to bind rRNA by itself. It is important during the early stages of 50S assembly. This is Large ribosomal subunit protein uL13 from Mesorhizobium japonicum (strain LMG 29417 / CECT 9101 / MAFF 303099) (Mesorhizobium loti (strain MAFF 303099)).